The chain runs to 272 residues: Phosphate import ATP-binding protein PstB (272 aa).

An ABC transporter domain is found at 26–267 (IVVKNWNLYY…PQVKRTEDYI (242 aa)). 58 to 65 (GPSGCGKS) contributes to the ATP binding site.

Belongs to the ABC transporter superfamily. Phosphate importer (TC 3.A.1.7) family. The complex is composed of two ATP-binding proteins (PstB), two transmembrane proteins (PstC and PstA) and a solute-binding protein (PstS).

The protein resides in the cell inner membrane. The enzyme catalyses phosphate(out) + ATP + H2O = ADP + 2 phosphate(in) + H(+). In terms of biological role, part of the ABC transporter complex PstSACB involved in phosphate import. Responsible for energy coupling to the transport system. This chain is Phosphate import ATP-binding protein PstB, found in Hydrogenovibrio crunogenus (strain DSM 25203 / XCL-2) (Thiomicrospira crunogena).